A 242-amino-acid polypeptide reads, in one-letter code: Biosynthetic peptidoglycan transglycosylase (242 aa).

Residues 19-39 (LMVVLAVFWGGGIALFSVAPV) form a helical membrane-spanning segment.

The protein belongs to the glycosyltransferase 51 family.

Its subcellular location is the cell inner membrane. The enzyme catalyses [GlcNAc-(1-&gt;4)-Mur2Ac(oyl-L-Ala-gamma-D-Glu-L-Lys-D-Ala-D-Ala)](n)-di-trans,octa-cis-undecaprenyl diphosphate + beta-D-GlcNAc-(1-&gt;4)-Mur2Ac(oyl-L-Ala-gamma-D-Glu-L-Lys-D-Ala-D-Ala)-di-trans,octa-cis-undecaprenyl diphosphate = [GlcNAc-(1-&gt;4)-Mur2Ac(oyl-L-Ala-gamma-D-Glu-L-Lys-D-Ala-D-Ala)](n+1)-di-trans,octa-cis-undecaprenyl diphosphate + di-trans,octa-cis-undecaprenyl diphosphate + H(+). The protein operates within cell wall biogenesis; peptidoglycan biosynthesis. Functionally, peptidoglycan polymerase that catalyzes glycan chain elongation from lipid-linked precursors. The protein is Biosynthetic peptidoglycan transglycosylase of Escherichia coli O139:H28 (strain E24377A / ETEC).